Consider the following 199-residue polypeptide: DnaJ homolog subfamily C member 5B (199 aa).

A phosphoserine mark is found at Ser14 and Ser16. Residues Ala19–Gly84 form the J domain.

In terms of assembly, interacts with the chaperone complex consisting of HSC70 and SGTA. Post-translationally, palmitoylated.

Its subcellular location is the membrane. In Sus scrofa (Pig), this protein is DnaJ homolog subfamily C member 5B (DNAJC5B).